The following is a 437-amino-acid chain: Transcription factor 12 (437 aa).

Disordered regions lie at residues 1–68 (EFHD…QTGD), 80–123 (PDHT…YENS), and 244–335 (ASNT…ERRM). Residues 13–37 (VSPTDISTSLPPMSSFHRGSTSSSP) show a composition bias toward polar residues. Thr-44 carries the phosphothreonine modification. Residue Ser-64 is modified to Phosphoserine. Over residues 83–94 (TSSSFPSNPSTP) the composition is skewed to low complexity. 2 stretches are compositionally biased toward polar residues: residues 95-107 (VGSP…TSQW) and 114-123 (APSSPSYENS). 2 stretches are compositionally biased toward basic and acidic residues: residues 273–285 (IKTE…ENLH) and 291–306 (DDMK…DIKV). Lys-274 is covalently cross-linked (Glycyl lysine isopeptide (Lys-Gly) (interchain with G-Cter in SUMO2)). Residue Ser-295 is modified to Phosphoserine. A Glycyl lysine isopeptide (Lys-Gly) (interchain with G-Cter in SUMO2) cross-link involves residue Lys-305. Thr-312 carries the phosphothreonine modification. Phosphoserine occurs at positions 313 and 314. Positions 323–335 (PEQKIEREKERRM) are enriched in basic and acidic residues. The 54-residue stretch at 332–385 (ERRMANNARERLRVRDINEAFKELGRMCQLHLKSEKPQTKLLILHQAVAVILSL) folds into the bHLH domain. Glycyl lysine isopeptide (Lys-Gly) (interchain with G-Cter in SUMO2) cross-links involve residues Lys-364 and Lys-408. Residues 387–410 (QQVRERNLNPKAACLKRREEEKVS) form a class A specific domain region. A disordered region spans residues 405–437 (EEEKVSAASAEPPTTLPGTHPGLSETTNPMGHL). Positions 416–427 (PPTTLPGTHPGL) are enriched in low complexity. The segment covering 428 to 437 (SETTNPMGHL) has biased composition (polar residues).

Efficient DNA binding requires dimerization with another bHLH protein. Forms homo- or heterooligomers with myogenin, E12 and ITF2 proteins. Interacts with NEUROD2. Interacts with PTF1A. Interacts with RUNX1T1. Interacts with BHLHA9.

The protein resides in the nucleus. Transcriptional regulator. Involved in the initiation of neuronal differentiation. Activates transcription by binding to the E box (5'-CANNTG-3'). Participates in the control of inducible RP4 gene expression in salivary cells. Binds to the RIPE3 element of the insulin II promoter. May be involved in the functional network that regulates the development of the GnRH axis. This chain is Transcription factor 12 (TCF12), found in Mesocricetus auratus (Golden hamster).